A 235-amino-acid chain; its full sequence is Putative cobalt transport protein CbiM 2 (235 aa).

Transmembrane regions (helical) follow at residues 9–29 (PAGW…MGII), 41–61 (YLPL…LKLP), 80–100 (FGYC…ALLL), 107–127 (TMGA…YAVY), 135–155 (INIY…TYII), 160–180 (LALA…AFFS), and 181–201 (IFAI…ALVF).

Belongs to the CbiM family. As to quaternary structure, forms an energy-coupling factor (ECF) transporter complex composed of an ATP-binding protein (A component, CbiO), a transmembrane protein (T component, CbiQ) and 2 possible substrate-capture proteins (S components, CbiM and CbiN) of unknown stoichimetry.

The protein localises to the cell membrane. The protein operates within cofactor biosynthesis; adenosylcobalamin biosynthesis. Functionally, part of the energy-coupling factor (ECF) transporter complex CbiMNOQ involved in cobalt import. This Methanosphaerula palustris (strain ATCC BAA-1556 / DSM 19958 / E1-9c) protein is Putative cobalt transport protein CbiM 2.